A 538-amino-acid chain; its full sequence is Chaperonin GroEL 1 (538 aa).

ATP-binding positions include 29 to 32 (TLGP), 86 to 90 (DGTTT), G413, 478 to 480 (NAA), and D494.

This sequence belongs to the chaperonin (HSP60) family. Forms a cylinder of 14 subunits composed of two heptameric rings stacked back-to-back. Interacts with the co-chaperonin GroES.

It is found in the cytoplasm. It carries out the reaction ATP + H2O + a folded polypeptide = ADP + phosphate + an unfolded polypeptide.. Its function is as follows. Together with its co-chaperonin GroES, plays an essential role in assisting protein folding. The GroEL-GroES system forms a nano-cage that allows encapsulation of the non-native substrate proteins and provides a physical environment optimized to promote and accelerate protein folding. This is Chaperonin GroEL 1 from Corynebacterium glutamicum (strain R).